A 120-amino-acid polypeptide reads, in one-letter code: NAD(P)H-quinone oxidoreductase subunit 3, chloroplastic (120 aa).

Transmembrane regions (helical) follow at residues 9-29 (IFWT…WISG), 64-84 (MFAL…PWAM), and 88-108 (VLGV…VVGL).

The protein belongs to the complex I subunit 3 family. In terms of assembly, NDH is composed of at least 16 different subunits, 5 of which are encoded in the nucleus.

The protein resides in the plastid. Its subcellular location is the chloroplast thylakoid membrane. It catalyses the reaction a plastoquinone + NADH + (n+1) H(+)(in) = a plastoquinol + NAD(+) + n H(+)(out). The enzyme catalyses a plastoquinone + NADPH + (n+1) H(+)(in) = a plastoquinol + NADP(+) + n H(+)(out). NDH shuttles electrons from NAD(P)H:plastoquinone, via FMN and iron-sulfur (Fe-S) centers, to quinones in the photosynthetic chain and possibly in a chloroplast respiratory chain. The immediate electron acceptor for the enzyme in this species is believed to be plastoquinone. Couples the redox reaction to proton translocation, and thus conserves the redox energy in a proton gradient. This chain is NAD(P)H-quinone oxidoreductase subunit 3, chloroplastic, found in Zea mays (Maize).